Here is a 250-residue protein sequence, read N- to C-terminus: 5'-nucleotidase SurE (250 aa).

Residues Asp8, Asp9, Ser39, and Asn95 each coordinate a divalent metal cation.

Belongs to the SurE nucleotidase family. A divalent metal cation is required as a cofactor.

The protein localises to the cytoplasm. The enzyme catalyses a ribonucleoside 5'-phosphate + H2O = a ribonucleoside + phosphate. Its function is as follows. Nucleotidase that shows phosphatase activity on nucleoside 5'-monophosphates. The chain is 5'-nucleotidase SurE from Syntrophobacter fumaroxidans (strain DSM 10017 / MPOB).